The chain runs to 326 residues: DnaJ homolog subfamily B member 6 (326 aa).

The 68-residue stretch at 2 to 69 folds into the J domain; the sequence is VDYYEVLGVQ…KKRDIYDKYG (68 aa). Residues 2–146 form an interaction with HSP70 region; the sequence is VDYYEVLGVQ…TGSFFSAFSG (145 aa). Residues 119 to 242 form an interaction with KRT18 region; it reads FEDFFGNRRG…ADDDALAEER (124 aa). Arginine 135 carries the post-translational modification Omega-N-methylarginine. Residues 249 to 326 are disordered; it reads ALPAQPAGLR…KKKKSTKGNH (78 aa). Residue serine 277 is modified to Phosphoserine.

In terms of assembly, homooligomer. Interacts with BAG3, HSPB8 and STUB1. Interacts with ALKBH1. Interacts with HSP70, KRT18 and PTTG.

The protein resides in the cytoplasm. The protein localises to the perinuclear region. It is found in the nucleus. It localises to the myofibril. Its subcellular location is the sarcomere. The protein resides in the z line. Functionally, has a stimulatory effect on the ATPase activity of HSP70 in a dose-dependent and time-dependent manner and hence acts as a co-chaperone of HSP70. Plays an indispensable role in the organization of KRT8/KRT18 filaments. Acts as an endogenous molecular chaperone for neuronal proteins including huntingtin. Suppresses aggregation and toxicity of polyglutamine-containing, aggregation-prone proteins. Also reduces cellular toxicity and caspase-3 activity. This chain is DnaJ homolog subfamily B member 6 (DNAJB6), found in Pongo abelii (Sumatran orangutan).